Consider the following 205-residue polypeptide: Holliday junction branch migration complex subunit RuvA (205 aa).

A domain I region spans residues methionine 1–isoleucine 64. Residues threonine 65–glutamate 143 form a domain II region. The interval arginine 144–proline 156 is flexible linker. A domain III region spans residues valine 157 to leucine 205.

It belongs to the RuvA family. As to quaternary structure, homotetramer. Forms an RuvA(8)-RuvB(12)-Holliday junction (HJ) complex. HJ DNA is sandwiched between 2 RuvA tetramers; dsDNA enters through RuvA and exits via RuvB. An RuvB hexamer assembles on each DNA strand where it exits the tetramer. Each RuvB hexamer is contacted by two RuvA subunits (via domain III) on 2 adjacent RuvB subunits; this complex drives branch migration. In the full resolvosome a probable DNA-RuvA(4)-RuvB(12)-RuvC(2) complex forms which resolves the HJ.

Its subcellular location is the cytoplasm. Functionally, the RuvA-RuvB-RuvC complex processes Holliday junction (HJ) DNA during genetic recombination and DNA repair, while the RuvA-RuvB complex plays an important role in the rescue of blocked DNA replication forks via replication fork reversal (RFR). RuvA specifically binds to HJ cruciform DNA, conferring on it an open structure. The RuvB hexamer acts as an ATP-dependent pump, pulling dsDNA into and through the RuvAB complex. HJ branch migration allows RuvC to scan DNA until it finds its consensus sequence, where it cleaves and resolves the cruciform DNA. The chain is Holliday junction branch migration complex subunit RuvA from Shewanella loihica (strain ATCC BAA-1088 / PV-4).